Here is a 1636-residue protein sequence, read N- to C-terminus: MEAVPRMPMIWLDLKEAGDFHFQPAVKKFVLKNYGENPEAYNEELKKLELLRQNAVRVPRDFEGCSVLRKYLGQLHYLQSRVPMGSGQEAAVPVTWTEIFSGKSVAHEDIKYEQACILYNLGALHSMLGAMDKRVSEEGMKVSCTHFQCAAGAFAYLREHFPQAYSVDMSRQILTLNVNLMLGQAQECLLEKSMLDNRKSFLVARISAQVVDYYKEACRALENPDTASLLGRIQKDWKKLVQMKIYYFAAVAHLHMGKQAEEQQKFGERVAYFQSALDKLNEAIKLAKGQPDTVQDALRFTMDVIGGKYNSAKKDNDFIYHEAVPALDTLQPVKGAPLVKPLPVNPTDPAVTGPDIFAKLVPMAAHEASSLYSEEKAKLLREMMAKIEDKNEVLDQFMDSMQLDPETVDNLDAYSHIPPQLMEKCAALSVRPDTVRNLVQSMQVLSGVFTDVEASLKDIRDLLEEDELLEQKFQEAVGQAGAISITSKAELAEVRREWAKYMEVHEKASFTNSELHRAMNLHVGNLRLLSGPLDQVRAALPTPALSPEDKAVLQNLKRILAKVQEMRDQRVSLEQQLRELIQKDDITASLVTTDHSEMKKLFEEQLKKYDQLKVYLEQNLAAQDRVLCALTEANVQYAAVRRVLSDLDQKWNSTLQTLVASYEAYEDLMKKSQEGRDFYADLESKVAALLERTQSTCQAREAARQQLLDRELKKKPPPRPTAPKPLLPRREESEAVEAGDPPEELRSLPPDMVAGPRLPDTFLGSATPLHFPPSPFPSSTGPGPHYLSGPLPPGTYSGPTQLIQPRAPGPHAMPVAPGPALYPAPAYTPELGLVPRSSPQHGVVSSPYVGVGPAPPVAGLPSAPPPQFSGPELAMAVRPATTTVDSIQAPIPSHTAPRPNPTPAPPPPCFPVPPPQPLPTPYTYPAGAKQPIPAQHHFSSGIPAGFPAPRIGPQPQPHPQPHPSQAFGPQPPQQPLPLQHPHLFPPQAPGLLPPQSPYPYAPQPGVLGQPPPPLHTQLYPGPAQDPLPAHSGALPFPSPGPPQPPHPPLAYGPAPSTRPMGPQAAPLTIRGPSSAGQSTPSPHLVPSPAPSPGPGPVPPRPPAAEPPPCLRRGAAAADLLSSSPESQHGGTQSPGGGQPLLQPTKVDAAEGRRPQALRLIERDPYEHPERLRQLQQELEAFRGQLGDVGALDTVWRELQDAQEHDARGRSIAIARCYSLKNRHQDVMPYDSNRVVLRSGKDDYINASCVEGLSPYCPPLVATQAPLPGTAADFWLMVHEQKVSVIVMLVSEAEMEKQKVARYFPTERGQPMVHGALSLALSSVRSTETHVERVLSLQFRDQSLKRSLVHLHFPTWPELGLPDSPSNLLRFIQEVHAHYLHQRPLHTPIIVHCSSGVGRTGAFALLYAAVQEVEAGNGIPELPQLVRRMRQQRKHMLQEKLHLRFCYEAVVRHVEQVLQRHGVPPPCKPLASASISQKNHLPQDSQDLVLGGDVPISSIQATIAKLSIRPPGGLESPVASLPGPAEPPGLPPASLPESTPIPSSSPPPLSSPLPEAPQPKEEPPVPEAPSSGPPSSSLELLASLTPEAFSLDSSLRGKQRMSKHNFLQAHNGQGLRATRPSDDPLSLLDPLWTLNKT.

The 387-residue stretch at 8–394 (PMIWLDLKEA…AKIEDKNEVL (387 aa)) folds into the BRO1 domain. TPR repeat units follow at residues 250–283 (AVAHLHMGKQAEEQQKFGERVAYFQSALDKLNEA) and 374–407 (EEKAKLLREMMAKIEDKNEVLDQFMDSMQLDPET). A coiled-coil region spans residues 550-623 (KAVLQNLKRI…VYLEQNLAAQ (74 aa)). The span at 701 to 714 (EAARQQLLDRELKK) shows a compositional bias: basic and acidic residues. Disordered regions lie at residues 701 to 812 (EAAR…GPHA) and 888 to 1151 (QAPI…AAEG). A Phosphoserine modification is found at serine 733. The tract at residues 770–1130 (HFPPSPFPSS…SSSPESQHGG (361 aa)) is his. Pro residues-rich tracts occupy residues 898–922 (RPNPTPAPPPPCFPVPPPQPLPTPY) and 950–962 (RIGPQPQPHPQPH). Residue arginine 950 is modified to Omega-N-methylarginine. 6 consecutive repeat copies span residues 953–954 (PQ), 955–956 (PQ), 957–958 (PH), 959–960 (PQ), 961–962 (PH), and 963–964 (PS). Residues 953-964 (PQPQPHPQPHPS) are 6 X 2 AA approximate tandem repeats of P-Q. Composition is skewed to pro residues over residues 983 to 1002 (LFPPQAPGLLPPQSPYPYAP), 1036 to 1050 (FPSPGPPQPPHPPLA), and 1083 to 1109 (HLVPSPAPSPGPGPVPPRPPAAEPPPC). Over residues 1120-1131 (LSSSPESQHGGT) the composition is skewed to polar residues. A phosphoserine mark is found at serine 1122 and serine 1123. Threonine 1131 carries the post-translational modification Phosphothreonine. The 261-residue stretch at 1192 to 1452 (DTVWRELQDA…RFCYEAVVRH (261 aa)) folds into the Tyrosine-protein phosphatase domain. Cysteine 1392 serves as the catalytic Phosphocysteine intermediate. A disordered region spans residues 1513 to 1636 (LESPVASLPG…LDPLWTLNKT (124 aa)). Composition is skewed to pro residues over residues 1523–1533 (PAEPPGLPPAS) and 1542–1556 (SSSPPPLSSPLPEAP). The span at 1567 to 1587 (APSSGPPSSSLELLASLTPEA) shows a compositional bias: low complexity. Arginine 1615 carries the post-translational modification Omega-N-methylarginine.

Belongs to the protein-tyrosine phosphatase family. Non-receptor class subfamily. As to quaternary structure, interacts with GRAP2 and GRB2. Interacts with UBAP1. Interacts with CHMP4B.

It localises to the nucleus. The protein localises to the cytoplasm. Its subcellular location is the cytoplasmic vesicle. It is found in the endosome. The protein resides in the cytoskeleton. It localises to the cilium basal body. The protein localises to the early endosome. The enzyme catalyses O-phospho-L-tyrosyl-[protein] + H2O = L-tyrosyl-[protein] + phosphate. Its function is as follows. Plays a role in sorting of endocytic ubiquitinated cargos into multivesicular bodies (MVBs) via its interaction with the ESCRT-I complex (endosomal sorting complex required for transport I), and possibly also other ESCRT complexes. May act as a negative regulator of Ras-mediated mitogenic activity. Plays a role in ciliogenesis. The chain is Tyrosine-protein phosphatase non-receptor type 23 (PTPN23) from Homo sapiens (Human).